Here is a 499-residue protein sequence, read N- to C-terminus: ATP synthase subunit beta, chloroplastic (499 aa).

Gly170–Thr177 lines the ATP pocket.

Belongs to the ATPase alpha/beta chains family. F-type ATPases have 2 components, CF(1) - the catalytic core - and CF(0) - the membrane proton channel. CF(1) has five subunits: alpha(3), beta(3), gamma(1), delta(1), epsilon(1). CF(0) has four main subunits: a(1), b(1), b'(1) and c(9-12).

It is found in the plastid. It localises to the chloroplast thylakoid membrane. It carries out the reaction ATP + H2O + 4 H(+)(in) = ADP + phosphate + 5 H(+)(out). Produces ATP from ADP in the presence of a proton gradient across the membrane. The catalytic sites are hosted primarily by the beta subunits. The chain is ATP synthase subunit beta, chloroplastic from Ipomoea purpurea (Common morning glory).